The chain runs to 276 residues: Large ribosomal subunit protein uL2 (276 aa).

The tract at residues 224 to 276 is disordered; it reads VMNPVDHPHGGGEGKAPIGRKSPMTPWGKPTLGYKTRKKKNKSDKFIIRRRKK. The segment covering 258–276 has biased composition (basic residues); it reads KTRKKKNKSDKFIIRRRKK.

Belongs to the universal ribosomal protein uL2 family. Part of the 50S ribosomal subunit. Forms a bridge to the 30S subunit in the 70S ribosome.

In terms of biological role, one of the primary rRNA binding proteins. Required for association of the 30S and 50S subunits to form the 70S ribosome, for tRNA binding and peptide bond formation. It has been suggested to have peptidyltransferase activity; this is somewhat controversial. Makes several contacts with the 16S rRNA in the 70S ribosome. The protein is Large ribosomal subunit protein uL2 of Geobacillus kaustophilus (strain HTA426).